A 336-amino-acid chain; its full sequence is Mitochondrial amidoxime reducing component 2 (336 aa).

Residues Met-1 to Leu-35 constitute a mitochondrion transit peptide. Residues Lys-138, Lys-144, Lys-173, Lys-187, Lys-287, and Lys-294 each participate in a glycyl lysine isopeptide (Lys-Gly) (interchain with G-Cter in ubiquitin) cross-link. In terms of domain architecture, MOSC spans Ala-188 to Met-334.

In terms of assembly, component of a complex composed of cytochrome b5, NADH-cytochrome b5 reductase (CYB5R3) and MTARC2. The cofactor is Mo-molybdopterin. Ubiquitinated by PRKN during mitophagy, leading to its degradation and enhancement of mitophagy. Deubiquitinated by USP30.

Its subcellular location is the mitochondrion outer membrane. The protein localises to the peroxisome. It carries out the reaction N(omega)-hydroxy-L-arginine + 2 Fe(II)-[cytochrome b5] + 2 H(+) = L-arginine + 2 Fe(III)-[cytochrome b5] + H2O. In terms of biological role, catalyzes the reduction of N-oxygenated molecules, acting as a counterpart of cytochrome P450 and flavin-containing monooxygenases in metabolic cycles. As a component of prodrug-converting system, reduces a multitude of N-hydroxylated prodrugs particularly amidoximes, leading to increased drug bioavailability. May be involved in mitochondrial N(omega)-hydroxy-L-arginine (NOHA) reduction, regulating endogenous nitric oxide levels and biosynthesis. Postulated to cleave the N-OH bond of N-hydroxylated substrates in concert with electron transfer from NADH to cytochrome b5 reductase then to cytochrome b5, the ultimate electron donor that primes the active site for substrate reduction. The sequence is that of Mitochondrial amidoxime reducing component 2 (MTARC2) from Bos taurus (Bovine).